A 376-amino-acid chain; its full sequence is Chaperone protein DnaJ (376 aa).

One can recognise a J domain in the interval 5–70 (DYYEVLGVAK…QKRAAYDQYG (66 aa)). The CR-type zinc-finger motif lies at 136-214 (GYDTQIRVPS…CHGSGKVKET (79 aa)). Positions 149, 152, 166, 169, 188, 191, 202, and 205 each coordinate Zn(2+). CXXCXGXG motif repeat units lie at residues 149 to 156 (CGICHGSG), 166 to 173 (CPTCHGQG), 188 to 195 (CPKCHGTG), and 202 to 209 (CVHCHGSG).

It belongs to the DnaJ family. As to quaternary structure, homodimer. Requires Zn(2+) as cofactor.

Its subcellular location is the cytoplasm. Functionally, participates actively in the response to hyperosmotic and heat shock by preventing the aggregation of stress-denatured proteins and by disaggregating proteins, also in an autonomous, DnaK-independent fashion. Unfolded proteins bind initially to DnaJ; upon interaction with the DnaJ-bound protein, DnaK hydrolyzes its bound ATP, resulting in the formation of a stable complex. GrpE releases ADP from DnaK; ATP binding to DnaK triggers the release of the substrate protein, thus completing the reaction cycle. Several rounds of ATP-dependent interactions between DnaJ, DnaK and GrpE are required for fully efficient folding. Also involved, together with DnaK and GrpE, in the DNA replication of plasmids through activation of initiation proteins. The chain is Chaperone protein DnaJ from Burkholderia thailandensis (strain ATCC 700388 / DSM 13276 / CCUG 48851 / CIP 106301 / E264).